A 370-amino-acid polypeptide reads, in one-letter code: Aminomethyltransferase (370 aa).

The protein belongs to the GcvT family. As to quaternary structure, the glycine cleavage system is composed of four proteins: P, T, L and H.

It carries out the reaction N(6)-[(R)-S(8)-aminomethyldihydrolipoyl]-L-lysyl-[protein] + (6S)-5,6,7,8-tetrahydrofolate = N(6)-[(R)-dihydrolipoyl]-L-lysyl-[protein] + (6R)-5,10-methylene-5,6,7,8-tetrahydrofolate + NH4(+). Functionally, the glycine cleavage system catalyzes the degradation of glycine. The sequence is that of Aminomethyltransferase from Leptospira biflexa serovar Patoc (strain Patoc 1 / Ames).